Reading from the N-terminus, the 95-residue chain is Protein TusB (95 aa).

Belongs to the DsrH/TusB family. In terms of assembly, heterohexamer, formed by a dimer of trimers. The hexameric TusBCD complex contains 2 copies each of TusB, TusC and TusD. The TusBCD complex interacts with TusE.

Its subcellular location is the cytoplasm. Its function is as follows. Part of a sulfur-relay system required for 2-thiolation of 5-methylaminomethyl-2-thiouridine (mnm(5)s(2)U) at tRNA wobble positions. The chain is Protein TusB from Klebsiella pneumoniae subsp. pneumoniae (strain ATCC 700721 / MGH 78578).